The primary structure comprises 494 residues: Nuclear distribution protein PAC1 (494 aa).

One can recognise a LisH domain in the interval 14–46; the sequence is QKNELDKSVLRYLNWNYKQTVRHEHAQDYESVR. The stretch at 90 to 123 forms a coiled coil; sequence NSIVRLQKKIIELEQNTETLVSQIKDLNTQVSEL. 7 WD repeats span residues 153 to 192, 196 to 244, 251 to 292, 295 to 334, 347 to 395, 415 to 454, and 457 to 492; these read NVES…IPLA, SHTK…CKFQ, GHEH…SLKT, PHSQ…SVGT, HFIE…LMAH, GHLS…HVWE, and HTGF…SNVF.

This sequence belongs to the WD repeat LIS1/nudF family. As to quaternary structure, self-associates. Interacts with NDL1 and dynein.

It is found in the cytoplasm. The protein localises to the cytoskeleton. Its subcellular location is the spindle pole. In terms of biological role, positively regulates the activity of the minus-end directed microtubule motor protein dynein. Plays a central role in positioning the mitotic spindle at the bud neck during cell division. Targets cytoplasmic dynein to microtubule plus ends, thereby promoting dynein-mediated microtubule sliding along the bud cortex and consequently the movement of the mitotic spindle to the bud neck. This is Nuclear distribution protein PAC1 from Saccharomyces cerevisiae (strain Lalvin EC1118 / Prise de mousse) (Baker's yeast).